Here is an 851-residue protein sequence, read N- to C-terminus: DNA mismatch repair protein MutS (851 aa).

Residue 602-609 (GPNMSGKS) participates in ATP binding.

Belongs to the DNA mismatch repair MutS family.

In terms of biological role, this protein is involved in the repair of mismatches in DNA. It is possible that it carries out the mismatch recognition step. This protein has a weak ATPase activity. The polypeptide is DNA mismatch repair protein MutS (Streptococcus pyogenes serotype M4 (strain MGAS10750)).